We begin with the raw amino-acid sequence, 148 residues long: Putative lysozyme C-2 (148 aa).

Positions 1-18 (MKALLVLGFLLLSASVQA) are cleaved as a signal peptide. Positions 19-148 (KVFKHCELAR…LSGYIRNCGV (130 aa)) constitute a C-type lysozyme domain. Intrachain disulfides connect Cys-24–Cys-146, Cys-48–Cys-134, Cys-83–Cys-99, and Cys-95–Cys-113. Catalysis depends on residues Glu-53 and Asp-71.

Belongs to the glycosyl hydrolase 22 family. In terms of assembly, monomer.

It is found in the secreted. The enzyme catalyses Hydrolysis of (1-&gt;4)-beta-linkages between N-acetylmuramic acid and N-acetyl-D-glucosamine residues in a peptidoglycan and between N-acetyl-D-glucosamine residues in chitodextrins.. Its function is as follows. Lysozymes have primarily a bacteriolytic function; those in tissues and body fluids are associated with the monocyte-macrophage system and enhance the activity of immunoagents. In the intestine they may also have a digestive function. The polypeptide is Putative lysozyme C-2 (Lyz2) (Rattus norvegicus (Rat)).